The sequence spans 443 residues: 26S proteasome regulatory subunit 4 homolog A (443 aa).

Disordered stretches follow at residues 1-55 (MGQG…LPTV) and 87-108 (RLKP…LRGT). 2 stretches are compositionally biased toward basic and acidic residues: residues 12–28 (QGDR…KKFE) and 87–106 (RLKP…DDLR). 229 to 236 (GEPGTGKT) serves as a coordination point for ATP. Residues Lys-296 and Lys-433 each participate in a glycyl lysine isopeptide (Lys-Gly) (interchain with G-Cter in ubiquitin) cross-link.

This sequence belongs to the AAA ATPase family. As to quaternary structure, component of the 19S regulatory particle (RP/PA700) base subcomplex of the 26S proteasome. The 26S proteasome is composed of a core protease (CP), known as the 20S proteasome, capped at one or both ends by the 19S regulatory particle (RP/PA700). The RP/PA700 complex is composed of at least 17 different subunits in two subcomplexes, the base and the lid, which form the portions proximal and distal to the 20S proteolytic core, respectively. Required for innate immunity. Interacts with UNI. As to expression, preferentially expressed in the root and shoot apical meristem.

It localises to the cytoplasm. The protein localises to the P-body. The protein resides in the nucleus. Functionally, the 26S protease is involved in the ATP-dependent degradation of ubiquitinated proteins. The regulatory (or ATPase) complex confers ATP dependency and substrate specificity to the 26S complex. Interacts with transit peptides of proteins targeted to the chloroplast, and may be involved in the degradation of unimported plastid protein precursors. Is required for the maintenance of postembryonic root and shoot meristems. Has a specific role in the regulation of organs size. Acts redundantly with RPT2B in the regulation of gametogenesis. With RPT2B plays a critical role in 26S proteasome assembly. Acts as an upstream signaling component for inducing both defense and morphological phenotypes in the constitutive active uni-1D mutant. Acts as a negative regulator of endoreduplication in trichome cells. May function after the completion of the third endoreduplication step (8C to 16C) mediated by RHL1. Acts as a negative regulator of transcriptional gene silencing (TGS) at specific endogenous genes through DNA methylation. Promotes post-transcriptional gene silencing (PTGS) by limiting the degradation of transgene aberrant RNAs by the RNA quality control (RQC) machinery, thus favoring their entry into cytoplasmic siRNA bodies where they can trigger PTGS. Involved in tolerance to zinc deficiency, possibly through alleviation of oxidative stresses or processing of poly-ubiquitinated proteins. Required for resistance to the fungal pathogen Golovinomyces cichoracearum. This is 26S proteasome regulatory subunit 4 homolog A from Arabidopsis thaliana (Mouse-ear cress).